The sequence spans 493 residues: Tripartite motif-containing protein 5 (493 aa).

N-acetylalanine is present on alanine 2. The segment at 15–59 (CPICLELLTQPLSLDCGHSFCQACLTANHKKSMLDKGESSCPVCR) adopts an RING-type zinc-finger fold. Position 86 is a phosphoserine (serine 86). The segment at 90–132 (QKVDHCARHGEKLLLFCQEDGKVICWLCERSQEHRGHHTFLTE) adopts a B box-type zinc-finger fold. Positions 95, 98, 117, and 123 each coordinate Zn(2+). Residues 130-241 (LTEEVAREYQ…ISDLEHRLQG (112 aa)) are a coiled coil. The required for interaction with GABARAP and for autophagy stretch occupies residues 185–198 (FEQLRDILDWEESN). Residues 281-493 (LKGMLEVFRE…VPMTLCSPSS (213 aa)) enclose the B30.2/SPRY domain.

The protein belongs to the TRIM/RBCC family. As to quaternary structure, can form homodimers and homotrimers. In addition to lower-order dimerization, also exhibits a higher-order multimerization and both low- and high-order multimerizations are essential for its restriction activity. Isoform Delta interacts with BTBD1 and BTBD2. Interacts with PSMC4, PSMC5, PSMD7 and HSPA8/HSC70. Interacts (via B30.2/SPRY domain) with HSPA1A/B. Interacts with PSMC2, MAP3K7/TAK1, TAB2 and TAB3. Interacts with SQSTM1. Interacts with TRIM6 and TRIM34. Interacts with ULK1 (phosphorylated form), GABARAP, GABARAPL1, GABARAPL2, MAP1LC3A, MAP1LC3C and BECN1. Degraded in a proteasome-independent fashion in the absence of viral infection but in a proteasome-dependent fashion following exposure to restriction sensitive virus. In terms of processing, autoubiquitinated in a RING finger- and UBE2D2-dependent manner. Monoubiquitinated by TRIM21. Deubiquitinated by Yersinia YopJ. Ubiquitination may not lead to proteasomal degradation.

It localises to the cytoplasm. Its subcellular location is the nucleus. It catalyses the reaction S-ubiquitinyl-[E2 ubiquitin-conjugating enzyme]-L-cysteine + [acceptor protein]-L-lysine = [E2 ubiquitin-conjugating enzyme]-L-cysteine + N(6)-ubiquitinyl-[acceptor protein]-L-lysine.. It participates in protein modification; protein ubiquitination. Its function is as follows. Capsid-specific restriction factor that prevents infection from non-host-adapted retroviruses. Blocks viral replication early in the life cycle, after viral entry but before reverse transcription. In addition to acting as a capsid-specific restriction factor, also acts as a pattern recognition receptor that activates innate immune signaling in response to the retroviral capsid lattice. Binding to the viral capsid triggers its E3 ubiquitin ligase activity, and in concert with the heterodimeric ubiquitin conjugating enzyme complex UBE2V1-UBE2N (also known as UBC13-UEV1A complex) generates 'Lys-63'-linked polyubiquitin chains, which in turn are catalysts in the autophosphorylation of the MAP3K7/TAK1 complex (includes TAK1, TAB2, and TAB3). Activation of the MAP3K7/TAK1 complex by autophosphorylation results in the induction and expression of NF-kappa-B and MAPK-responsive inflammatory genes, thereby leading to an innate immune response in the infected cell. Restricts infection by N-tropic murine leukemia virus (N-MLV), equine infectious anemia virus (EIAV), simian immunodeficiency virus of macaques (SIVmac), feline immunodeficiency virus (FIV), and bovine immunodeficiency virus (BIV). Plays a role in regulating autophagy through activation of autophagy regulator BECN1 by causing its dissociation from its inhibitors BCL2 and TAB2. Also plays a role in autophagy by acting as a selective autophagy receptor which recognizes and targets HIV-1 capsid protein p24 for autophagic destruction. The chain is Tripartite motif-containing protein 5 (TRIM5) from Homo sapiens (Human).